The sequence spans 996 residues: Sodium/potassium-transporting ATPase subunit alpha-A (996 aa).

Transmembrane regions (helical) follow at residues 73–93 (LFGG…IAYT) and 107–123 (LYLG…TGCF). Residues 191 to 211 (DNSSLTGESEPQSRSTECTND) are disordered. 2 helical membrane passes run 268 to 290 (FIHI…SFLY) and 297 to 325 (AAIF…TLTA). Residue D353 is the 4-aspartylphosphate intermediate of the active site. K483 contacts ATP. Mg(2+) is bound by residues D692 and D696. A run of 4 helical transmembrane segments spans residues 762-785 (LSPF…ILCI), 820-847 (ERLI…VIMG), 889-909 (YTCH…DLII), and 926-951 (TLNF…DKGL).

It belongs to the cation transport ATPase (P-type) (TC 3.A.3) family. Type IIC subfamily. As to quaternary structure, the sodium/potassium-transporting ATPase is composed of a catalytic alpha subunit, an auxiliary non-catalytic beta subunit and an additional regulatory subunit.

Its subcellular location is the cell membrane. It carries out the reaction K(+)(out) + Na(+)(in) + ATP + H2O = K(+)(in) + Na(+)(out) + ADP + phosphate + H(+). Functionally, this is the catalytic component of the active enzyme, which catalyzes the hydrolysis of ATP coupled with the exchange of sodium and potassium ions across the plasma membrane. This action creates the electrochemical gradient of sodium and potassium ions, providing the energy for active transport of various nutrients. This chain is Sodium/potassium-transporting ATPase subunit alpha-A, found in Artemia franciscana (Brine shrimp).